The following is a 349-amino-acid chain: UDP-3-O-acylglucosamine N-acyltransferase (349 aa).

His-248 functions as the Proton acceptor in the catalytic mechanism.

Belongs to the transferase hexapeptide repeat family. LpxD subfamily. In terms of assembly, homotrimer.

It carries out the reaction a UDP-3-O-[(3R)-3-hydroxyacyl]-alpha-D-glucosamine + a (3R)-hydroxyacyl-[ACP] = a UDP-2-N,3-O-bis[(3R)-3-hydroxyacyl]-alpha-D-glucosamine + holo-[ACP] + H(+). The protein operates within bacterial outer membrane biogenesis; LPS lipid A biosynthesis. Its function is as follows. Catalyzes the N-acylation of UDP-3-O-acylglucosamine using 3-hydroxyacyl-ACP as the acyl donor. Is involved in the biosynthesis of lipid A, a phosphorylated glycolipid that anchors the lipopolysaccharide to the outer membrane of the cell. The sequence is that of UDP-3-O-acylglucosamine N-acyltransferase from Colwellia psychrerythraea (strain 34H / ATCC BAA-681) (Vibrio psychroerythus).